The following is a 512-amino-acid chain: Neuronal acetylcholine receptor subunit alpha-2 (512 aa).

An N-terminal signal peptide occupies residues 1 to 27 (MAPSHPAFQFWIHLYLWCLLLMPAVLA). The Extracellular portion of the chain corresponds to 28 to 241 (QQGSHTHAED…VTYYFVIRRL (214 aa)). N-linked (GlcNAc...) asparagine glycans are attached at residues Asn-56 and Asn-106. A disulfide bridge links Cys-160 with Cys-174. A glycan (N-linked (GlcNAc...) asparagine) is linked at Asn-212. Cys-224 and Cys-225 are disulfide-bonded. 3 consecutive transmembrane segments (helical) span residues 242-266 (PLFYTINLIIPCLLISCLTVLVFYL), 274-292 (ITLCISVLLSLTVFLLLIT), and 308-329 (YLLFTMIFVTLSIVITVFVLNV). Over 330-485 (HHRSPSTHNM…WKYVAMVVDR (156 aa)) the chain is Cytoplasmic. Residues 486 to 504 (IFLWLFIIVCFLGTIGLFL) traverse the membrane as a helical segment.

The protein belongs to the ligand-gated ion channel (TC 1.A.9) family. Acetylcholine receptor (TC 1.A.9.1) subfamily. Alpha-2/CHRNA2 sub-subfamily. Neuronal AChR is composed of two different types of subunits: alpha and non-alpha (beta). CHRNA2/alpha-2 subunit can be combined to CHRNB2/beta-2 or CHRNB4/beta-4 to give rise to functional receptors. Both CHRNA2:CHRNB2 and CHRNA2:CHRNB4 nAChR complexes are heteropentamers with two subtypes: LS (low agonist sensitivity) with a (CHRNA2)3:(CHRNB2/4)2 and HS (high agonist sensitivity) with a (CHRNA2)2:(CHRNB2/4)3 stoichiometries; the subtypes differ in their subunit binding interfaces which are involved in ligand binding.

The protein resides in the synaptic cell membrane. It is found in the cell membrane. The enzyme catalyses Ca(2+)(in) = Ca(2+)(out). The catalysed reaction is K(+)(in) = K(+)(out). It catalyses the reaction Na(+)(in) = Na(+)(out). Component of neuronal acetylcholine receptors (nAChRs) that function as pentameric, ligand-gated cation channels with high calcium permeability among other activities. nAChRs are excitatory neurotrasnmitter receptors formed by a collection of nAChR subunits known to mediate synaptic transmission in the nervous system and the neuromuscular junction. Each nAchR subunit confers differential attributes to channel properties, including activation, deactivation and desensitization kinetics, pH sensitivity, cation permeability, and binding to allosteric modulators. CHRNA2 forms heteropentameric neuronal acetylcholine receptors with CHRNB2 and CHRNB4 and plays a role in nicotine dependence. The protein is Neuronal acetylcholine receptor subunit alpha-2 (Chrna2) of Mus musculus (Mouse).